The primary structure comprises 179 residues: Ribosome maturation factor RimM (179 aa).

The 78-residue stretch at 102 to 179 folds into the PRC barrel domain; that stretch reads DGEYYWYQLE…EMKVDWDADF (78 aa).

The protein belongs to the RimM family. As to quaternary structure, binds ribosomal protein uS19.

Its subcellular location is the cytoplasm. In terms of biological role, an accessory protein needed during the final step in the assembly of 30S ribosomal subunit, possibly for assembly of the head region. Essential for efficient processing of 16S rRNA. May be needed both before and after RbfA during the maturation of 16S rRNA. It has affinity for free ribosomal 30S subunits but not for 70S ribosomes. The sequence is that of Ribosome maturation factor RimM from Pseudomonas syringae pv. syringae (strain B728a).